The primary structure comprises 341 residues: ATPase GET3 (341 aa).

34–41 provides a ligand contact to ATP; that stretch reads KGGVGKTT. Residue aspartate 63 is part of the active site. 2 residues coordinate ATP: glutamate 245 and asparagine 272. Residues cysteine 283 and cysteine 286 each coordinate Zn(2+).

It belongs to the arsA ATPase family. As to quaternary structure, homodimer.

It is found in the cytoplasm. Its subcellular location is the endoplasmic reticulum. Its function is as follows. ATPase required for the post-translational delivery of tail-anchored (TA) proteins to the endoplasmic reticulum. Recognizes and selectively binds the transmembrane domain of TA proteins in the cytosol. This complex then targets to the endoplasmic reticulum by membrane-bound receptors, where the tail-anchored protein is released for insertion. This process is regulated by ATP binding and hydrolysis. ATP binding drives the homodimer towards the closed dimer state, facilitating recognition of newly synthesized TA membrane proteins. ATP hydrolysis is required for insertion. Subsequently, the homodimer reverts towards the open dimer state, lowering its affinity for the membrane-bound receptor, and returning it to the cytosol to initiate a new round of targeting. In Ajellomyces dermatitidis (strain ER-3 / ATCC MYA-2586) (Blastomyces dermatitidis), this protein is ATPase GET3.